We begin with the raw amino-acid sequence, 263 residues long: Ret finger protein-like 4B (263 aa).

The RING-type zinc finger occupies cysteine 11–arginine 53. The B30.2/SPRY domain maps to histidine 76–proline 263.

The sequence is that of Ret finger protein-like 4B (RFPL4B) from Homo sapiens (Human).